A 344-amino-acid chain; its full sequence is Dihydroorotase (344 aa).

Histidine 14 and histidine 16 together coordinate Zn(2+). Substrate-binding positions include 16–18 (HLR) and asparagine 42. Zn(2+) is bound by residues lysine 100, histidine 137, and histidine 175. At lysine 100 the chain carries N6-carboxylysine. Histidine 137 contributes to the substrate binding site. Position 220 (leucine 220) interacts with substrate. Aspartate 248 provides a ligand contact to Zn(2+). Residue aspartate 248 is part of the active site. The substrate site is built by histidine 252 and alanine 264.

The protein belongs to the metallo-dependent hydrolases superfamily. DHOase family. Class II DHOase subfamily. In terms of assembly, homodimer. It depends on Zn(2+) as a cofactor.

The catalysed reaction is (S)-dihydroorotate + H2O = N-carbamoyl-L-aspartate + H(+). Its pathway is pyrimidine metabolism; UMP biosynthesis via de novo pathway; (S)-dihydroorotate from bicarbonate: step 3/3. Catalyzes the reversible cyclization of carbamoyl aspartate to dihydroorotate. The protein is Dihydroorotase of Cupriavidus necator (strain ATCC 17699 / DSM 428 / KCTC 22496 / NCIMB 10442 / H16 / Stanier 337) (Ralstonia eutropha).